Reading from the N-terminus, the 104-residue chain is Large ribosomal subunit protein uL23 (104 aa).

Belongs to the universal ribosomal protein uL23 family. As to quaternary structure, part of the 50S ribosomal subunit. Contacts protein L29, and trigger factor when it is bound to the ribosome.

Functionally, one of the early assembly proteins it binds 23S rRNA. One of the proteins that surrounds the polypeptide exit tunnel on the outside of the ribosome. Forms the main docking site for trigger factor binding to the ribosome. The chain is Large ribosomal subunit protein uL23 from Nostoc sp. (strain PCC 7120 / SAG 25.82 / UTEX 2576).